The chain runs to 503 residues: MNSAIMQGAAMATSHGIARLNRHNAQRNHFHIPTANRLFYQLQTPCTSTEEERRTVQTDDVAEIGMQRPDYQMYCGEEEISEQFVKLNVGGQRFMLRKDTIRRRGVGRLLDLINKPVADSNADAFFSSTSEFYFERPPSLFHIVYQFYLNGVIHQPSNLCPVDIIEELEYWRIIPDQYLASCCCAQQIDDDDEEVEEQDKPNLFKTLRFGEIRRCVWNIIEEPASSGKAQAFAVCSVVFVLISISGLVLGSLPELQVATKQRNNLTGEEFTEMEPMPILGYIEYVCIVWFTMEYGLKMLVSAERSKTFRQLLNIIDLLAILPFIIEMLLLIFGISTEQLRDLKGAFLVIRILRVLRVIRVLKLGRYSSGLQMFGKTLKASFRQLGMMAMVVMTGVIFFSTLVYFLEKDEPASKFHSIPAACWWCIVTMTTVGYGDLTPVTVPGKLVATGAIACGVLVLALPITIIVDNFMKVAETERPAGGNRYRTSQYPKATKSEQMILKVT.

Topologically, residues 1–231 are cytoplasmic; the sequence is MNSAIMQGAA…EPASSGKAQA (231 aa). The Required for dendritic localization signature appears at 217-219; it reads WNI. A helical transmembrane segment spans residues 232-252; it reads FAVCSVVFVLISISGLVLGSL. At 253 to 275 the chain is on the extracellular side; that stretch reads PELQVATKQRNNLTGEEFTEMEP. Residue Asn-264 is glycosylated (N-linked (GlcNAc...) asparagine). A helical transmembrane segment spans residues 276–296; the sequence is MPILGYIEYVCIVWFTMEYGL. The Cytoplasmic portion of the chain corresponds to 297–313; the sequence is KMLVSAERSKTFRQLLN. A helical membrane pass occupies residues 314–334; it reads IIDLLAILPFIIEMLLLIFGI. The Extracellular segment spans residues 335–346; that stretch reads STEQLRDLKGAF. Residues 347–366 traverse the membrane as a helical; Voltage-sensor segment; sequence LVIRILRVLRVIRVLKLGRY. Residues 367 to 383 are Cytoplasmic-facing; sequence SSGLQMFGKTLKASFRQ. Residues 368–383 form an S4-S5 linker region; it reads SGLQMFGKTLKASFRQ. A helical transmembrane segment spans residues 384-404; the sequence is LGMMAMVVMTGVIFFSTLVYF. Topologically, residues 405–417 are extracellular; that stretch reads LEKDEPASKFHSI. Positions 418–429 form an intramembrane region, helical; sequence PAACWWCIVTMT. Residues 430-434 lie within the membrane without spanning it; sequence TVGYG. The Selectivity filter signature appears at 430 to 435; it reads TVGYGD. Topologically, residues 435–445 are extracellular; that stretch reads DLTPVTVPGKL. A helical transmembrane segment spans residues 446–466; it reads VATGAIACGVLVLALPITIIV. Residues 467 to 503 lie on the Cytoplasmic side of the membrane; sequence DNFMKVAETERPAGGNRYRTSQYPKATKSEQMILKVT. The Required for dendritic localization motif lies at 496-500; sequence EQMIL.

The protein belongs to the potassium channel family. B (Shab) (TC 1.A.1.2) subfamily. Kv2.2/KCNB2 sub-subfamily. Homotetramer or heterotetramer. Interacts with unc-101 (via N-terminus); which targets kvs-4 to dendrites. In terms of tissue distribution, expressed in the cholinergic motor neuron DA9, mechanosensory neurons ALM and PLM, and the interneuron PVPL.

It is found in the cell membrane. It localises to the perikaryon. Its subcellular location is the cell projection. The protein resides in the axon. The protein localises to the dendrite. Voltage-gated potassium channel that mediates transmembrane potassium transport in excitable membranes. This Caenorhabditis elegans protein is Probable voltage-gated potassium channel subunit kvs-4.